Reading from the N-terminus, the 1047-residue chain is Formin-like protein 3 (1047 aa).

G2 is lipidated: N-myristoyl glycine. Positions 22 to 462 (VPMPDPTELE…AAFQRHNNIE (441 aa)) constitute a GBD/FH3 domain. Residues 520-561 (AVPVEAVAPPPPPPPPPPPPPPAPPLPSEVESIPIPPPPPPP) form a disordered region. The span at 527 to 546 (APPPPPPPPPPPPPPAPPLP) shows a compositional bias: pro residues. An FH2 domain is found at 580 to 970 (IKKPIKTKFR…MREKLLAQEA (391 aa)). The DAD domain occupies 1000 to 1037 (DHRPVYEGKDGTIEDIITVLKSVPFTARTAKRGSRFFC).

This sequence belongs to the formin homology family.

The protein resides in the cytoplasm. Its subcellular location is the cell membrane. In terms of biological role, required for developmental angiogenesis, but not for vasculogenesis. This chain is Formin-like protein 3 (fmnl3), found in Danio rerio (Zebrafish).